An 861-amino-acid polypeptide reads, in one-letter code: Transcription factor opdJ (861 aa).

Residues 11–37 (CSHCSKAKARCDRKVPCSRCVSKQLVC) constitute a DNA-binding region (zn(2)-C6 fungal-type).

It is found in the nucleus. Transcription factor that positively regulates the gene cluster that mediates the biosynthesis of oxopyrrolidines, polyketide-amino acid hybrid compounds with feature structures of tetramic acid. The protein is Transcription factor opdJ of Penicillium oxalicum (strain 114-2 / CGMCC 5302) (Penicillium decumbens).